Reading from the N-terminus, the 184-residue chain is MAYPGKSTKSYDTPQHPWQAERMASEVELVKKYGLRNKRELWKSLSVLRRFRGDARRLLAESAESDLIGHSKTEADQLLTKLIRFSILKSDSNIDDVLGLQTEAILERRLQTQVHRLGLARTARQARQFITHGHIAIDGKRVTVPGMMVTREQEMNVEYYGTSPMTKESHPERPAQIAASVVEE.

Positions 108-172 (RRLQTQVHRL…SPMTKESHPE (65 aa)) constitute an S4 RNA-binding domain. Residues 163 to 184 (SPMTKESHPERPAQIAASVVEE) are disordered.

It belongs to the universal ribosomal protein uS4 family. In terms of assembly, part of the 30S ribosomal subunit. Contacts protein S5. The interaction surface between S4 and S5 is involved in control of translational fidelity.

In terms of biological role, one of the primary rRNA binding proteins, it binds directly to 16S rRNA where it nucleates assembly of the body of the 30S subunit. Its function is as follows. With S5 and S12 plays an important role in translational accuracy. This chain is Small ribosomal subunit protein uS4, found in Methanococcoides burtonii (strain DSM 6242 / NBRC 107633 / OCM 468 / ACE-M).